Reading from the N-terminus, the 187-residue chain is MSRLVKKPIPYPENVKVSYDEKEHKVTVEGPKGKLELNIHPDIKVTLNQQERWIKLDRPSDRSFHKAIHGTMAALIKNMIKGVTEGFTEILEIHGLGYRAQLKGNVLELHLGKSHPDIYPIPPDVKIEVKGNEIHIHGIDKQRVGQVAAEIRSFRKPDPYKGKGIRYKGEQLSSNPERLQVRSKEVR.

The tract at residues 159-187 is disordered; it reads PYKGKGIRYKGEQLSSNPERLQVRSKEVR.

This sequence belongs to the universal ribosomal protein uL6 family. Part of the 50S ribosomal subunit.

This protein binds to the 23S rRNA, and is important in its secondary structure. It is located near the subunit interface in the base of the L7/L12 stalk, and near the tRNA binding site of the peptidyltransferase center. This chain is Large ribosomal subunit protein uL6, found in Aquifex pyrophilus.